A 707-amino-acid polypeptide reads, in one-letter code: MGMSKSLSCFGYPLSIFFIVVNEFCERFSYYGMRALLILYFRNFIGWDDNLSTVIYHTFVALCYLTPILGALIADAWLGKFKTIVWLSIVYTIGQAVTSLSSVNELTDNNHDGTPDSLPVHVAVCMIGLLLIALGTGGIKPCVSAFGGDQFEEGQEKQRNRFFSIFYLAINAGSLLSTIITPMVRVQQCGIHVKQACYPLAFGIPAILMAVSLIVFIIGSGMYKKFKPQGNILSKVVKCICFAIKNRFRHRSKQFPKRAHWLDWAKEKYDERLIAQIKMVTRVLFLYIPLPMFWALFDQQGSRWTLQATTMSGRIGILEIQPDQMQTVNTILIIILVPIMDAVVYPLIAKCGLNFTSLKKMTIGMFLASMAFVAAAILQVEIDKTLPVFPKANEVQIKVLNVGSENMIISLPGQTVTLNQMSQTNEFMTFNEDTLTSINITSGSQVTMITPSLEAGQRHTLLVWAPNNYRVVNDGLTQKSDKGENGIRFVNTYSQPINVTMSGKVYEHIASYNASEYQFFTSGVKGFTVSSAGISEQCRRDFESPYLEFGSAYTYLITSQATGCPQVTEFEDIPPNTMNMAWQIPQYFLITSGEVVFSITGLEFSYSQAPSNMKSVLQAGWLLTVAVGNIIVLIVAGAGQINKQWAEYILFAALLLVVCVIFAIMARFYTYVNPAEIEAQFEEDEKKKNPEKNDLYPSLAPVSQTQM.

The chain crosses the membrane as a helical span at residues Met-1–Val-21. Residues Asn-22–Thr-53 are Extracellular-facing. Asn-50 carries N-linked (GlcNAc...) asparagine glycosylation. The helical transmembrane segment at Val-54–Ala-74 threads the bilayer. Over Asp-75 to Lys-82 the chain is Cytoplasmic. A helical membrane pass occupies residues Thr-83–Val-103. The Extracellular portion of the chain corresponds to Asn-104–Leu-118. The helical transmembrane segment at Pro-119–Ile-139 threads the bilayer. Residues Lys-140 to Arg-161 are Cytoplasmic-facing. A helical transmembrane segment spans residues Phe-162–Pro-182. Over Met-183–Tyr-198 the chain is Extracellular. The helical transmembrane segment at Pro-199–Gly-219 threads the bilayer. The Cytoplasmic segment spans residues Ser-220–Gln-276. A helical transmembrane segment spans residues Ile-277–Phe-297. At Asp-298–Thr-327 the chain is on the extracellular side. Residues Val-328–Ile-348 form a helical membrane-spanning segment. Residues Ala-349–Met-361 are Cytoplasmic-facing. A helical membrane pass occupies residues Thr-362–Ile-382. Residues Asp-383–Gln-583 lie on the Extracellular side of the membrane. The segment at Asp-383–Gln-583 is extracellular domain (ECD). 3 N-linked (GlcNAc...) asparagine glycosylation sites follow: Asn-439, Asn-498, and Asn-513. Residues Ile-584–Phe-604 traverse the membrane as a helical segment. Topologically, residues Ser-605–Gln-618 are cytoplasmic. A helical transmembrane segment spans residues Ala-619 to Gly-639. Topologically, residues Gln-640–Gln-644 are extracellular. A helical membrane pass occupies residues Trp-645–Met-665. The Cytoplasmic segment spans residues Ala-666 to Met-707. Residues Glu-682–Met-707 are disordered. Residues Asp-684–Asp-694 show a composition bias toward basic and acidic residues.

This sequence belongs to the major facilitator superfamily. Proton-dependent oligopeptide transporter (POT/PTR) (TC 2.A.17) family. In terms of assembly, interacts (via extracellular domain region) with trypsin. As to expression, intestine, kidney, liver and low in brain.

It is found in the apical cell membrane. It carries out the reaction a dipeptide(out) + H(+)(out) = a dipeptide(in) + H(+)(in). The catalysed reaction is an L-amino acid tripeptide(out) + H(+)(out) = an L-amino acid tripeptide(in) + H(+)(in). It catalyses the reaction L-alanyl-L-lysine(out) + H(+)(out) = L-alanyl-L-lysine(in) + H(+)(in). The enzyme catalyses L-alanyl-L-proline(out) + H(+)(out) = L-alanyl-L-proline(in) + H(+)(in). It carries out the reaction L-alanyl-L-valine(out) + H(+)(out) = L-alanyl-L-valine(in) + H(+)(in). The catalysed reaction is carnosine(out) + H(+)(out) = carnosine(in) + H(+)(in). It catalyses the reaction glycyl-L-glutamine(out) + H(+)(out) = glycyl-L-glutamine(in) + H(+)(in). The enzyme catalyses glycyl-L-leucine(out) + H(+)(out) = glycyl-L-leucine(in) + H(+)(in). It carries out the reaction glycyl-L-proline(out) + H(+)(out) = glycyl-L-proline(in) + H(+)(in). The catalysed reaction is glycyl-sarcosine(out) + H(+)(out) = glycyl-sarcosine(in) + H(+)(in). It catalyses the reaction L-leucyl-L-leucine(out) + H(+)(out) = L-leucyl-L-leucine(in) + H(+)(in). The enzyme catalyses L-leucyl-L-proline(out) + H(+)(out) = L-leucyl-L-proline(in) + H(+)(in). It carries out the reaction L-phenylalanyl-L-leucine(out) + H(+)(out) = L-phenylalanyl-L-leucine(in) + H(+)(in). The catalysed reaction is L-phenylalanyl-L-phenylalanine(out) + H(+)(out) = L-phenylalanyl-L-phenylalanine(in) + H(+)(in). It catalyses the reaction L-lysyl-glycine(out) + H(+)(out) = L-lysyl-glycine(in) + H(+)(in). The enzyme catalyses L-tyrosylglycine(out) + H(+)(out) = L-tyrosylglycine(in) + H(+)(in). It carries out the reaction L-alanyl-L-aspartate(out) + 2 H(+)(out) = L-alanyl-L-aspartate(in) + 2 H(+)(in). The catalysed reaction is L-aspartyl-glycine(out) + 2 H(+)(out) = L-aspartyl-glycine(in) + 2 H(+)(in). It catalyses the reaction glycyl-L-aspartate(out) + 2 H(+)(out) = glycyl-L-aspartate(in) + 2 H(+)(in). The enzyme catalyses glycyl-L-glutamate(out) + 2 H(+)(out) = glycyl-L-glutamate(in) + 2 H(+)(in). It carries out the reaction L-alanyl-L-leucyl-L-alanine(out) + H(+)(out) = L-alanyl-L-leucyl-L-alanine(in) + H(+)(in). The catalysed reaction is L-alanyl-L-prolylglycine(out) + H(+)(out) = L-alanyl-L-prolylglycine(in) + H(+)(in). It catalyses the reaction glycylglycyl-L-isoleucine(out) + H(+)(out) = glycylglycyl-L-isoleucine(in) + H(+)(in). The enzyme catalyses glycylglycyl-L-proline(out) + H(+)(out) = glycylglycyl-L-proline(in) + H(+)(in). It carries out the reaction L-methionyl-L-phenylalanyl-L-methionine(out) + H(+)(out) = L-methionyl-L-phenylalanyl-L-methionine(in) + H(+)(in). The catalysed reaction is N-acetyl-D-muramoyl-L-alanyl-D-isoglutamine(out) + 2 H(+)(out) = N-acetyl-D-muramoyl-L-alanyl-D-isoglutamine(in) + 2 H(+)(in). It catalyses the reaction N(alpha)-formyl-L-methionyl-L-leucyl-L-phenylalanine(out) + 2 H(+)(out) = N(alpha)-formyl-L-methionyl-L-leucyl-L-phenylalanine(in) + 2 H(+)(in). Electrogenic proton-coupled amino-acid transporter that transports oligopeptides of 2 to 4 amino acids with a preference for dipeptides. Transports neutral and monovalently charged peptides with a proton to peptide stoichiometry of 1:1 or 2:1. Primarily responsible for the absorption of dietary di- and tripeptides from the small intestinal lumen. Mediates transepithelial transport of muramyl and N-formylated bacterial dipeptides contributing to recognition of pathogenic bacteria by the mucosal immune system. The protein is Solute carrier family 15 member 1 (SLC15A1) of Oryctolagus cuniculus (Rabbit).